The following is a 313-amino-acid chain: Ribosomal protein L11 methyltransferase (313 aa).

Thr161, Gly182, Asp204, and Asn247 together coordinate S-adenosyl-L-methionine.

Belongs to the methyltransferase superfamily. PrmA family.

Its subcellular location is the cytoplasm. It carries out the reaction L-lysyl-[protein] + 3 S-adenosyl-L-methionine = N(6),N(6),N(6)-trimethyl-L-lysyl-[protein] + 3 S-adenosyl-L-homocysteine + 3 H(+). Methylates ribosomal protein L11. This chain is Ribosomal protein L11 methyltransferase, found in Halalkalibacterium halodurans (strain ATCC BAA-125 / DSM 18197 / FERM 7344 / JCM 9153 / C-125) (Bacillus halodurans).